The sequence spans 311 residues: Succinate dehydrogenase [ubiquinone] iron-sulfur subunit 2, mitochondrial (311 aa).

A mitochondrion-targeting transit peptide spans 1–63 (MILRRTLPRL…EEIRDHRRGD (63 aa)). Positions 1 to 70 (MILRRTLPRL…RGDAAAASPA (70 aa)) are disordered. Positions 51–63 (AKEEEIRDHRRGD) are enriched in basic and acidic residues. The 92-residue stretch at 77 to 168 (FRVYRWSPDA…ATTVTPLPHM (92 aa)) folds into the 2Fe-2S ferredoxin-type domain. [2Fe-2S] cluster is bound by residues cysteine 128, cysteine 133, and cysteine 148. Residues 211 to 241 (ERKRLDGLYECILCACCSAACPSYWWNAEAF) enclose the 4Fe-4S ferredoxin-type domain. [4Fe-4S] cluster is bound by residues cysteine 221, cysteine 224, and cysteine 227. Cysteine 231 contacts [3Fe-4S] cluster. Tryptophan 236 is an a ubiquinone binding site. [3Fe-4S] cluster contacts are provided by cysteine 279 and cysteine 285. Cysteine 289 is a binding site for [4Fe-4S] cluster.

Belongs to the succinate dehydrogenase/fumarate reductase iron-sulfur protein family. As to quaternary structure, component of complex II composed of eight subunits in plants: four classical SDH subunits SDH1, SDH2, SDH3 and SDH4 (a flavoprotein (FP), an iron-sulfur protein (IP), and a cytochrome b composed of a large and a small subunit.), as well as four subunits unknown in mitochondria from bacteria and heterotrophic eukaryotes. It depends on [2Fe-2S] cluster as a cofactor. [3Fe-4S] cluster is required as a cofactor. [4Fe-4S] cluster serves as cofactor.

The protein localises to the mitochondrion inner membrane. The enzyme catalyses a quinone + succinate = fumarate + a quinol. It functions in the pathway carbohydrate metabolism; tricarboxylic acid cycle; fumarate from succinate (eukaryal route): step 1/1. In terms of biological role, iron-sulfur protein (IP) subunit of succinate dehydrogenase (SDH) that is involved in complex II of the mitochondrial electron transport chain and is responsible for transferring electrons from succinate to ubiquinone (coenzyme Q). In Oryza sativa subsp. japonica (Rice), this protein is Succinate dehydrogenase [ubiquinone] iron-sulfur subunit 2, mitochondrial.